A 158-amino-acid chain; its full sequence is Regenerating islet-derived protein 4 (158 aa).

The N-terminal stretch at 1 to 22 is a signal peptide; sequence MASRSMRLLLLLSCLAKTGVLG. An intrachain disulfide couples Cys-30 to Cys-41. The C-type lectin domain occupies 37-155; it reads HKSNCYGYFR…CNKRQHFLCK (119 aa). Asn-50 is a glycosylation site (N-linked (GlcNAc...) asparagine). Disulfide bonds link Cys-58–Cys-154 and Cys-129–Cys-146. A carbohydrate is bound by residues 98-103 and 135-137; these read DPQKRQ and NNN.

Highly expressed in the gastrointestinal tract including the duodenum, jejunum, ileum, ileocecum, appendix, descending colon, pancreas and small intestine. Weakly expressed in normal colon and stomach. Strongly expressed in most colorectal tumors than in normal colon. Preferentially expressed in mucinous tumors and in some cases neuro-endocrine tumors. Expressed in mucus-secreting cells and enterocyte-like cells. In small intestine expressed at the basal perinuclear zone of goblet cells.

It is found in the secreted. Functionally, calcium-independent lectin displaying mannose-binding specificity and able to maintain carbohydrate recognition activity in an acidic environment. May be involved in inflammatory and metaplastic responses of the gastrointestinal epithelium. This chain is Regenerating islet-derived protein 4 (REG4), found in Homo sapiens (Human).